A 411-amino-acid polypeptide reads, in one-letter code: Na(+)-translocating NADH-quinone reductase subunit F (411 aa).

The chain crosses the membrane as a helical span at residues 6-26 (AIGGVAMFTLIIMSFVAIILA). The 2Fe-2S ferredoxin-type domain maps to 35 to 129 (GDVTIHINDN…DMKIEIDPEF (95 aa)). [2Fe-2S] cluster-binding residues include cysteine 72, cysteine 78, cysteine 81, and cysteine 113. In terms of domain architecture, FAD-binding FR-type spans 132–273 (VQKWECEVIS…SGPYGEFFAK (142 aa)).

This sequence belongs to the NqrF family. In terms of assembly, composed of six subunits; NqrA, NqrB, NqrC, NqrD, NqrE and NqrF. The cofactor is [2Fe-2S] cluster. FAD serves as cofactor.

The protein resides in the cell inner membrane. It carries out the reaction a ubiquinone + n Na(+)(in) + NADH + H(+) = a ubiquinol + n Na(+)(out) + NAD(+). In terms of biological role, NQR complex catalyzes the reduction of ubiquinone-1 to ubiquinol by two successive reactions, coupled with the transport of Na(+) ions from the cytoplasm to the periplasm. The first step is catalyzed by NqrF, which accepts electrons from NADH and reduces ubiquinone-1 to ubisemiquinone by a one-electron transfer pathway. The protein is Na(+)-translocating NADH-quinone reductase subunit F of Psychrobacter arcticus (strain DSM 17307 / VKM B-2377 / 273-4).